We begin with the raw amino-acid sequence, 635 residues long: Threonine--tRNA ligase (635 aa).

In terms of domain architecture, TGS spans 1–61 (MIKITLKDGS…ENDCTLNLLT (61 aa)). Residues 242-532 (DHRKLGRELD…LTEHYAGAFP (291 aa)) are catalytic. Zn(2+) is bound by residues C333, H384, and H509.

It belongs to the class-II aminoacyl-tRNA synthetase family. In terms of assembly, homodimer. It depends on Zn(2+) as a cofactor.

The protein localises to the cytoplasm. It carries out the reaction tRNA(Thr) + L-threonine + ATP = L-threonyl-tRNA(Thr) + AMP + diphosphate + H(+). In terms of biological role, catalyzes the attachment of threonine to tRNA(Thr) in a two-step reaction: L-threonine is first activated by ATP to form Thr-AMP and then transferred to the acceptor end of tRNA(Thr). Also edits incorrectly charged L-seryl-tRNA(Thr). In Acetivibrio thermocellus (strain ATCC 27405 / DSM 1237 / JCM 9322 / NBRC 103400 / NCIMB 10682 / NRRL B-4536 / VPI 7372) (Clostridium thermocellum), this protein is Threonine--tRNA ligase.